Reading from the N-terminus, the 466-residue chain is A-type ATP synthase subunit B (466 aa).

It belongs to the ATPase alpha/beta chains family. As to quaternary structure, has multiple subunits with at least A(3), B(3), C, D, E, F, H, I and proteolipid K(x).

It localises to the cell membrane. Functionally, component of the A-type ATP synthase that produces ATP from ADP in the presence of a proton gradient across the membrane. The B chain is a regulatory subunit. This Sulfolobus acidocaldarius (strain ATCC 33909 / DSM 639 / JCM 8929 / NBRC 15157 / NCIMB 11770) protein is A-type ATP synthase subunit B.